Here is a 305-residue protein sequence, read N- to C-terminus: Small ribosomal subunit protein uS3 (305 aa).

The KH type-2 domain occupies 17–86 (IDEFFSEELS…DPQVDVQEVD (70 aa)). Acidic residues-rich tracts occupy residues 207 to 262 (EPEG…EAET) and 272 to 305 (AAEE…EEET). The disordered stretch occupies residues 207 to 305 (EPEGDVEELL…EDETTDEEET (99 aa)).

This sequence belongs to the universal ribosomal protein uS3 family. Part of the 30S ribosomal subunit.

Its function is as follows. Binds the lower part of the 30S subunit head. The polypeptide is Small ribosomal subunit protein uS3 (Natronomonas pharaonis (strain ATCC 35678 / DSM 2160 / CIP 103997 / JCM 8858 / NBRC 14720 / NCIMB 2260 / Gabara) (Halobacterium pharaonis)).